Here is a 38-residue protein sequence, read N- to C-terminus: Photosystem II reaction center protein M (38 aa).

The helical transmembrane segment at 7–27 (GFVASILFVLVPSVFLIILYI) threads the bilayer.

It belongs to the PsbM family. PSII is composed of 1 copy each of membrane proteins PsbA, PsbB, PsbC, PsbD, PsbE, PsbF, PsbH, PsbI, PsbJ, PsbK, PsbL, PsbM, PsbT, PsbX, PsbY, PsbZ, Psb30/Ycf12, peripheral proteins PsbO, CyanoQ (PsbQ), PsbU, PsbV and a large number of cofactors. It forms dimeric complexes.

Its subcellular location is the cellular thylakoid membrane. Functionally, one of the components of the core complex of photosystem II (PSII). PSII is a light-driven water:plastoquinone oxidoreductase that uses light energy to abstract electrons from H(2)O, generating O(2) and a proton gradient subsequently used for ATP formation. It consists of a core antenna complex that captures photons, and an electron transfer chain that converts photonic excitation into a charge separation. This subunit is found at the monomer-monomer interface. The chain is Photosystem II reaction center protein M from Nostoc sp. (strain PCC 7120 / SAG 25.82 / UTEX 2576).